We begin with the raw amino-acid sequence, 427 residues long: Glutamate-1-semialdehyde 2,1-aminomutase (427 aa).

K265 bears the N6-(pyridoxal phosphate)lysine mark.

Belongs to the class-III pyridoxal-phosphate-dependent aminotransferase family. HemL subfamily. In terms of assembly, homodimer. It depends on pyridoxal 5'-phosphate as a cofactor.

It localises to the cytoplasm. The enzyme catalyses (S)-4-amino-5-oxopentanoate = 5-aminolevulinate. The protein operates within porphyrin-containing compound metabolism; protoporphyrin-IX biosynthesis; 5-aminolevulinate from L-glutamyl-tRNA(Glu): step 2/2. In Paraburkholderia phytofirmans (strain DSM 17436 / LMG 22146 / PsJN) (Burkholderia phytofirmans), this protein is Glutamate-1-semialdehyde 2,1-aminomutase.